The following is a 250-amino-acid chain: 3-deoxy-manno-octulosonate cytidylyltransferase (250 aa).

Belongs to the KdsB family.

Its subcellular location is the cytoplasm. It catalyses the reaction 3-deoxy-alpha-D-manno-oct-2-ulosonate + CTP = CMP-3-deoxy-beta-D-manno-octulosonate + diphosphate. Its pathway is nucleotide-sugar biosynthesis; CMP-3-deoxy-D-manno-octulosonate biosynthesis; CMP-3-deoxy-D-manno-octulosonate from 3-deoxy-D-manno-octulosonate and CTP: step 1/1. The protein operates within bacterial outer membrane biogenesis; lipopolysaccharide biosynthesis. Functionally, activates KDO (a required 8-carbon sugar) for incorporation into bacterial lipopolysaccharide in Gram-negative bacteria. The polypeptide is 3-deoxy-manno-octulosonate cytidylyltransferase (Geobacter sulfurreducens (strain ATCC 51573 / DSM 12127 / PCA)).